The sequence spans 787 residues: ATP-dependent zinc metalloprotease FtsH (787 aa).

Over 1–5 (MNRKN) the chain is Cytoplasmic. A helical transmembrane segment spans residues 6–26 (VIRMVTAIAVVVLLGWSFFYF). The Extracellular segment spans residues 27–110 (SDDTRGYKFV…KVTTAVNEGS (84 aa)). A helical membrane pass occupies residues 111 to 131 (ILGELLVYVLPLLLLVGLFVM). Residues 132-787 (FSRMQGGARM…VSPSNPPAHG (656 aa)) lie on the Cytoplasmic side of the membrane. 203–210 (GPPGTGKT) contacts ATP. H425 is a binding site for Zn(2+). E426 is an active-site residue. The Zn(2+) site is built by H429 and D501. The segment at 616 to 787 (DFGGRIPSDK…VSPSNPPAHG (172 aa)) is disordered. 2 stretches are compositionally biased toward low complexity: residues 650–671 (AFKA…AAQS) and 700–709 (YGAPPGWHAP). Residues 710-720 (GWPPQQPPDYW) show a composition bias toward pro residues. The span at 721 to 732 (YPPEQQPSQSPY) shows a compositional bias: low complexity. The span at 733 to 762 (WPQPAPSYPGQAPPPYPSYPPCPSYPPPGQ) shows a compositional bias: pro residues.

This sequence in the central section; belongs to the AAA ATPase family. In the C-terminal section; belongs to the peptidase M41 family. As to quaternary structure, homohexamer. The cofactor is Zn(2+).

Its subcellular location is the cell membrane. Acts as a processive, ATP-dependent zinc metallopeptidase for both cytoplasmic and membrane proteins. Plays a role in the quality control of integral membrane proteins. This Mycobacterium leprae (strain TN) protein is ATP-dependent zinc metalloprotease FtsH.